The chain runs to 258 residues: Phosphonates import ATP-binding protein PhnC 3 (258 aa).

Residues 2–246 (IEFKNVSLVY…TFEEIYGRKI (245 aa)) enclose the ABC transporter domain. 35 to 42 (GLSGAGKS) contributes to the ATP binding site.

The protein belongs to the ABC transporter superfamily. Phosphonates importer (TC 3.A.1.9.1) family. As to quaternary structure, the complex is composed of two ATP-binding proteins (PhnC), two transmembrane proteins (PhnE) and a solute-binding protein (PhnD).

Its subcellular location is the cell membrane. It carries out the reaction phosphonate(out) + ATP + H2O = phosphonate(in) + ADP + phosphate + H(+). Its function is as follows. Part of the ABC transporter complex PhnCDE involved in phosphonates import. Responsible for energy coupling to the transport system. This chain is Phosphonates import ATP-binding protein PhnC 3, found in Halalkalibacterium halodurans (strain ATCC BAA-125 / DSM 18197 / FERM 7344 / JCM 9153 / C-125) (Bacillus halodurans).